The sequence spans 330 residues: Phenylalanine--tRNA ligase alpha subunit (330 aa).

E257 is a binding site for Mg(2+).

It belongs to the class-II aminoacyl-tRNA synthetase family. Phe-tRNA synthetase alpha subunit type 1 subfamily. Tetramer of two alpha and two beta subunits. Mg(2+) serves as cofactor.

The protein resides in the cytoplasm. It carries out the reaction tRNA(Phe) + L-phenylalanine + ATP = L-phenylalanyl-tRNA(Phe) + AMP + diphosphate + H(+). In Nostoc sp. (strain PCC 7120 / SAG 25.82 / UTEX 2576), this protein is Phenylalanine--tRNA ligase alpha subunit.